Reading from the N-terminus, the 275-residue chain is Secreted RxLR effector protein 153 (275 aa).

Positions M1–A27 are cleaved as a signal peptide. N45 carries an N-linked (GlcNAc...) asparagine glycan. A RxLR-dEER motif is present at residues R48–R63.

The protein belongs to the RxLR effector family.

It is found in the secreted. Its subcellular location is the host cell membrane. Secreted effector that completely suppresses the host cell death induced by cell death-inducing proteins. In Plasmopara viticola (Downy mildew of grapevine), this protein is Secreted RxLR effector protein 153.